We begin with the raw amino-acid sequence, 330 residues long: GTP 3',8-cyclase (330 aa).

A Radical SAM core domain is found at 14-225 (RFGRTVDYVR…RERLADAYPE (212 aa)). Arg-23 serves as a coordination point for GTP. [4Fe-4S] cluster contacts are provided by Cys-30 and Cys-34. Tyr-36 is an S-adenosyl-L-methionine binding site. Cys-37 provides a ligand contact to [4Fe-4S] cluster. Arg-70 lines the GTP pocket. Gly-74 contributes to the S-adenosyl-L-methionine binding site. Thr-101 is a binding site for GTP. Ser-125 provides a ligand contact to S-adenosyl-L-methionine. Lys-162 is a GTP binding site. Positions 259 and 262 each coordinate [4Fe-4S] cluster. Residue 264-266 (KLR) participates in GTP binding. [4Fe-4S] cluster is bound at residue Cys-276. Basic and acidic residues predominate over residues 309-318 (KPKDGLKSSH). The segment at 309 to 330 (KPKDGLKSSHDTAASSMSQIGG) is disordered. Polar residues predominate over residues 319-330 (DTAASSMSQIGG).

Belongs to the radical SAM superfamily. MoaA family. As to quaternary structure, monomer and homodimer. [4Fe-4S] cluster serves as cofactor.

It catalyses the reaction GTP + AH2 + S-adenosyl-L-methionine = (8S)-3',8-cyclo-7,8-dihydroguanosine 5'-triphosphate + 5'-deoxyadenosine + L-methionine + A + H(+). The protein operates within cofactor biosynthesis; molybdopterin biosynthesis. Functionally, catalyzes the cyclization of GTP to (8S)-3',8-cyclo-7,8-dihydroguanosine 5'-triphosphate. This Chlorobaculum tepidum (strain ATCC 49652 / DSM 12025 / NBRC 103806 / TLS) (Chlorobium tepidum) protein is GTP 3',8-cyclase.